We begin with the raw amino-acid sequence, 110 residues long: Large ribosomal subunit protein uL22 (110 aa).

This sequence belongs to the universal ribosomal protein uL22 family. Part of the 50S ribosomal subunit.

Its function is as follows. This protein binds specifically to 23S rRNA; its binding is stimulated by other ribosomal proteins, e.g. L4, L17, and L20. It is important during the early stages of 50S assembly. It makes multiple contacts with different domains of the 23S rRNA in the assembled 50S subunit and ribosome. The globular domain of the protein is located near the polypeptide exit tunnel on the outside of the subunit, while an extended beta-hairpin is found that lines the wall of the exit tunnel in the center of the 70S ribosome. This is Large ribosomal subunit protein uL22 from Marinomonas sp. (strain MWYL1).